We begin with the raw amino-acid sequence, 116 residues long: Ribosome-binding factor A (116 aa).

It belongs to the RbfA family. Monomer. Binds 30S ribosomal subunits, but not 50S ribosomal subunits or 70S ribosomes.

It localises to the cytoplasm. One of several proteins that assist in the late maturation steps of the functional core of the 30S ribosomal subunit. Associates with free 30S ribosomal subunits (but not with 30S subunits that are part of 70S ribosomes or polysomes). Required for efficient processing of 16S rRNA. May interact with the 5'-terminal helix region of 16S rRNA. The chain is Ribosome-binding factor A from Staphylococcus aureus (strain JH9).